The primary structure comprises 428 residues: Acylglycerol kinase, mitochondrial (428 aa).

Residues 18–34 form a hydrophobic region; the sequence is STVGFCLLAYGSHWLYG. The 142-residue stretch at 61–202 folds into the DAGKc domain; the sequence is SAIKKATVFL…LDVLQIKGEQ (142 aa).

It belongs to the AGK family. In terms of assembly, component of the TIM22 complex. Requires Mg(2+) as cofactor.

It is found in the mitochondrion inner membrane. Its subcellular location is the mitochondrion intermembrane space. The catalysed reaction is a monoacylglycerol + ATP = a monoacyl-sn-glycero-3-phosphate + ADP + H(+). It carries out the reaction a 1,2-diacyl-sn-glycerol + ATP = a 1,2-diacyl-sn-glycero-3-phosphate + ADP + H(+). It catalyses the reaction an N-acylsphing-4-enine + ATP = an N-acylsphing-4-enine 1-phosphate + ADP + H(+). The enzyme catalyses 1-(9Z-octadecenoyl)-sn-glycerol + ATP = 1-(9Z-octadecenoyl)-sn-glycero-3-phosphate + ADP + H(+). The catalysed reaction is 1,2-di-(9Z-octadecenoyl)-sn-glycerol + ATP = 1,2-di-(9Z-octadecenoyl)-sn-glycero-3-phosphate + ADP + H(+). It carries out the reaction a 1-acyl-sn-glycerol + ATP = a 1-acyl-sn-glycero-3-phosphate + ADP + H(+). It catalyses the reaction 1-hexadecanoyl-sn-glycerol + ATP = 1-hexadecanoyl-sn-glycero-3-phosphate + ADP + H(+). The enzyme catalyses a 2-acylglycerol + ATP = a 2-acyl-sn-glycerol 3-phosphate + ADP + H(+). The catalysed reaction is 2-(5Z,8Z,11Z,14Z-eicosatetraenoyl)-glycerol + ATP = 2-(5Z,8Z,11Z,14Z-eicosatetraenoyl)-sn-glycero-3-phosphate + ADP + H(+). It carries out the reaction 1-(5Z,8Z,11Z,14Z-eicosatetraenoyl)-sn-glycerol + ATP = 1-(5Z,8Z,11Z,14Z-eicosatetraenoyl)-sn-glycero-3-phosphate + ADP + H(+). It catalyses the reaction N-(hexanoyl)sphing-4-enine + ATP = N-hexanoylsphing-4-enine 1-phosphate + ADP + H(+). The protein operates within lipid metabolism; glycerolipid metabolism. In terms of biological role, lipid kinase that can phosphorylate both monoacylglycerol and diacylglycerol to form lysophosphatidic acid (LPA) and phosphatidic acid (PA), respectively. Phosphorylates ceramide but not sphingosine. Phosphorylates 1,2-dioleoylglycerol more rapidly than 2,3-dioleoylglycerol. Independently of its lipid kinase activity, acts as a component of the TIM22 complex. The TIM22 complex mediates the import and insertion of multi-pass transmembrane proteins into the mitochondrial inner membrane by forming a twin-pore translocase that uses the membrane potential as the external driving force. The polypeptide is Acylglycerol kinase, mitochondrial (Xenopus laevis (African clawed frog)).